The primary structure comprises 443 residues: Inactive polypeptide N-acetylgalactosaminyltransferase-like protein 5 (443 aa).

At 1–4 (MRNA) the chain is on the cytoplasmic side. Residues 5–27 (IIRCLFYGSLTFGIWTALLFIYL) form a helical; Signal-anchor for type II membrane protein membrane-spanning segment. Topologically, residues 28–443 (HHNHVSNWQK…PELEASVNRS (416 aa)) are lumenal. A glycan (N-linked (GlcNAc...) asparagine) is linked at N87. Disulfide bonds link C124–C355 and C346–C422. Residues 133-243 (LPTASIVICF…RVWLEPLLHA (111 aa)) form a catalytic subdomain A region. Residues D174 and R204 each contribute to the substrate site. D227 is a Mn(2+) binding site. S228 contacts substrate. A Mn(2+)-binding site is contributed by H229. A catalytic subdomain B region spans residues 301–363 (PIRSPAMSGG…PCSRVGHISK (63 aa)). Residue W332 participates in substrate binding. H360 contributes to the Mn(2+) binding site.

Belongs to the glycosyltransferase 2 family. GalNAc-T subfamily. Mn(2+) serves as cofactor. In terms of tissue distribution, expressed in testis.

Its subcellular location is the late endosome membrane. Functionally, probable inactive glycosyltransferase required during spermatid development. May participate in protein loading into the acrosomes and accumulation of ubiquitin-proteasome systems around the head-tail coupling apparatus region. In Macaca fascicularis (Crab-eating macaque), this protein is Inactive polypeptide N-acetylgalactosaminyltransferase-like protein 5 (GALNTL5).